Consider the following 69-residue polypeptide: uncharacterized protein (69 aa).

The region spanning 6-56 (SEECTPAKKKYDACFNDWYANKFLKGDLHNRDCDELFAEYKSCLLKALKTK) is the CHCH domain. Short sequence motifs (cx9C motif) lie at residues 9 to 19 (CTPAKKKYDAC) and 38 to 48 (CDELFAEYKSC). Cystine bridges form between cysteine 9-cysteine 48 and cysteine 19-cysteine 38.

This sequence belongs to the TRIAP1/MDM35 family.

This is an uncharacterized protein from Schizosaccharomyces pombe (strain 972 / ATCC 24843) (Fission yeast).